Consider the following 189-residue polypeptide: Prophage DNA-packing protein NohA (189 aa).

It belongs to the terminase small subunit family.

This Escherichia coli (strain K12) protein is Prophage DNA-packing protein NohA (nohA).